We begin with the raw amino-acid sequence, 30 residues long: Trypsin inhibitor 2 (30 aa).

Cystine bridges form between cysteine 2–cysteine 19, cysteine 9–cysteine 21, and cysteine 15–cysteine 27.

The protein belongs to the protease inhibitor I7 (squash-type serine protease inhibitor) family.

The protein resides in the secreted. Its function is as follows. Inhibits trypsin. In Ecballium elaterium (Squirting cucumber), this protein is Trypsin inhibitor 2.